The sequence spans 219 residues: N-(5'-phosphoribosyl)anthranilate isomerase (219 aa).

It belongs to the TrpF family.

The enzyme catalyses N-(5-phospho-beta-D-ribosyl)anthranilate = 1-(2-carboxyphenylamino)-1-deoxy-D-ribulose 5-phosphate. It participates in amino-acid biosynthesis; L-tryptophan biosynthesis; L-tryptophan from chorismate: step 3/5. This Bordetella avium (strain 197N) protein is N-(5'-phosphoribosyl)anthranilate isomerase.